Here is a 379-residue protein sequence, read N- to C-terminus: Queuine tRNA-ribosyltransferase (379 aa).

Asp-94 functions as the Proton acceptor in the catalytic mechanism. Residues 94–98 (DSGGF), Asp-148, Gln-191, and Gly-218 each bind substrate. The segment at 249–255 (GVGSPDS) is RNA binding. Asp-268 serves as the catalytic Nucleophile. The segment at 273-277 (TRIAR) is RNA binding; important for wobble base 34 recognition. Residues Cys-306, Cys-308, Cys-311, and His-337 each coordinate Zn(2+).

It belongs to the queuine tRNA-ribosyltransferase family. In terms of assembly, homodimer. Within each dimer, one monomer is responsible for RNA recognition and catalysis, while the other monomer binds to the replacement base PreQ1. Zn(2+) serves as cofactor.

The enzyme catalyses 7-aminomethyl-7-carbaguanine + guanosine(34) in tRNA = 7-aminomethyl-7-carbaguanosine(34) in tRNA + guanine. It functions in the pathway tRNA modification; tRNA-queuosine biosynthesis. Functionally, catalyzes the base-exchange of a guanine (G) residue with the queuine precursor 7-aminomethyl-7-deazaguanine (PreQ1) at position 34 (anticodon wobble position) in tRNAs with GU(N) anticodons (tRNA-Asp, -Asn, -His and -Tyr). Catalysis occurs through a double-displacement mechanism. The nucleophile active site attacks the C1' of nucleotide 34 to detach the guanine base from the RNA, forming a covalent enzyme-RNA intermediate. The proton acceptor active site deprotonates the incoming PreQ1, allowing a nucleophilic attack on the C1' of the ribose to form the product. After dissociation, two additional enzymatic reactions on the tRNA convert PreQ1 to queuine (Q), resulting in the hypermodified nucleoside queuosine (7-(((4,5-cis-dihydroxy-2-cyclopenten-1-yl)amino)methyl)-7-deazaguanosine). The chain is Queuine tRNA-ribosyltransferase from Listeria monocytogenes serovar 1/2a (strain ATCC BAA-679 / EGD-e).